A 110-amino-acid polypeptide reads, in one-letter code: Phosphoribosyl-AMP cyclohydrolase (110 aa).

Residue Asp-80 participates in Mg(2+) binding. Residue Cys-81 participates in Zn(2+) binding. Mg(2+)-binding residues include Asp-82 and Asp-84. Residues Cys-97 and Cys-104 each contribute to the Zn(2+) site.

This sequence belongs to the PRA-CH family. In terms of assembly, homodimer. Mg(2+) serves as cofactor. It depends on Zn(2+) as a cofactor.

The protein resides in the cytoplasm. It catalyses the reaction 1-(5-phospho-beta-D-ribosyl)-5'-AMP + H2O = 1-(5-phospho-beta-D-ribosyl)-5-[(5-phospho-beta-D-ribosylamino)methylideneamino]imidazole-4-carboxamide. The protein operates within amino-acid biosynthesis; L-histidine biosynthesis; L-histidine from 5-phospho-alpha-D-ribose 1-diphosphate: step 3/9. Its function is as follows. Catalyzes the hydrolysis of the adenine ring of phosphoribosyl-AMP. This Clostridium botulinum (strain Okra / Type B1) protein is Phosphoribosyl-AMP cyclohydrolase.